The chain runs to 391 residues: S-adenosylmethionine synthase (391 aa).

His14 provides a ligand contact to ATP. Mg(2+) is bound at residue Asp16. Glu42 is a binding site for K(+). Residues Glu55 and Gln98 each contribute to the L-methionine site. The segment at 98–108 (QSADIAMGVDE) is flexible loop. ATP is bound by residues 172–174 (DGK), 238–239 (RF), Asp247, 253–254 (RK), Ala270, and Lys274. Asp247 contributes to the L-methionine binding site. L-methionine is bound at residue Lys278.

Belongs to the AdoMet synthase family. As to quaternary structure, homotetramer; dimer of dimers. Requires Mg(2+) as cofactor. It depends on K(+) as a cofactor.

The protein localises to the cytoplasm. The catalysed reaction is L-methionine + ATP + H2O = S-adenosyl-L-methionine + phosphate + diphosphate. The protein operates within amino-acid biosynthesis; S-adenosyl-L-methionine biosynthesis; S-adenosyl-L-methionine from L-methionine: step 1/1. Functionally, catalyzes the formation of S-adenosylmethionine (AdoMet) from methionine and ATP. The overall synthetic reaction is composed of two sequential steps, AdoMet formation and the subsequent tripolyphosphate hydrolysis which occurs prior to release of AdoMet from the enzyme. This Clostridium botulinum (strain Alaska E43 / Type E3) protein is S-adenosylmethionine synthase.